The sequence spans 164 residues: Interleukin-10 (164 aa).

A signal peptide spans 1 to 18 (MPSSALLCCLIFLARVAA). Disulfide bonds link Cys30–Cys126 and Cys80–Cys132. N-linked (GlcNAc...) asparagine glycosylation occurs at Asn134.

This sequence belongs to the IL-10 family. Homodimer. Interacts with IL10RA and IL10RB.

It is found in the secreted. Functionally, major immune regulatory cytokine that acts on many cells of the immune system where it has profound anti-inflammatory functions, limiting excessive tissue disruption caused by inflammation. Mechanistically, IL10 binds to its heterotetrameric receptor comprising IL10RA and IL10RB leading to JAK1 and STAT2-mediated phosphorylation of STAT3. In turn, STAT3 translocates to the nucleus where it drives expression of anti-inflammatory mediators. Targets antigen-presenting cells (APCs) such as macrophages and monocytes and inhibits their release of pro-inflammatory cytokines including granulocyte-macrophage colony-stimulating factor /GM-CSF, granulocyte colony-stimulating factor/G-CSF, IL-1 alpha, IL-1 beta, IL-6, IL-8 and TNF-alpha. Also interferes with antigen presentation by reducing the expression of MHC-class II and co-stimulatory molecules, thereby inhibiting their ability to induce T cell activation. In addition, controls the inflammatory response of macrophages by reprogramming essential metabolic pathways including mTOR signaling. This Orcinus orca (Killer whale) protein is Interleukin-10 (IL10).